We begin with the raw amino-acid sequence, 422 residues long: Histidinol dehydrogenase (422 aa).

Residues Tyr-123, Gln-183, and Asn-206 each coordinate NAD(+). Residues Ser-229, Gln-251, and His-254 each coordinate substrate. The Zn(2+) site is built by Gln-251 and His-254. Catalysis depends on proton acceptor residues Glu-320 and His-321. Residues His-321, Asp-354, Glu-408, and His-413 each contribute to the substrate site. Position 354 (Asp-354) interacts with Zn(2+). A Zn(2+)-binding site is contributed by His-413.

It belongs to the histidinol dehydrogenase family. Zn(2+) serves as cofactor.

It carries out the reaction L-histidinol + 2 NAD(+) + H2O = L-histidine + 2 NADH + 3 H(+). It participates in amino-acid biosynthesis; L-histidine biosynthesis; L-histidine from 5-phospho-alpha-D-ribose 1-diphosphate: step 9/9. Catalyzes the sequential NAD-dependent oxidations of L-histidinol to L-histidinaldehyde and then to L-histidine. The polypeptide is Histidinol dehydrogenase (Haloarcula marismortui (strain ATCC 43049 / DSM 3752 / JCM 8966 / VKM B-1809) (Halobacterium marismortui)).